The following is a 276-amino-acid chain: MLLRFTKMHGLGNDFMVLDLVSQHAHILPKHAKQWGDRHTGIGFDQLLLVEAPNNPDVDFRYRIFNSDGSEVEQCGNGARCFARFVLDKRLTAKKQIRVETKSGIIELDIRSDGQISVDMGPPRFVPEEIPFEAAEQATRYNVEVDGQNIELAAVSMGNPHAVLRVDDINNAPVHELGPKIEHHPRFPARVNVGFLHVVDRQRAQLRVWERGAGETQACGTGACAAAVAAISQGWMDSPLLIDLPGGRLSIEWAGPGHSVMMTGPAVRVYEGQVRL.

3 residues coordinate substrate: asparagine 13, glutamine 46, and asparagine 66. The Proton donor role is filled by cysteine 75. Residues 76–77, asparagine 159, asparagine 192, and 210–211 each bind substrate; these read GN and ER. Residue cysteine 219 is the Proton acceptor of the active site. Substrate is bound at residue 220–221; sequence GT.

It belongs to the diaminopimelate epimerase family. As to quaternary structure, homodimer.

Its subcellular location is the cytoplasm. The enzyme catalyses (2S,6S)-2,6-diaminopimelate = meso-2,6-diaminopimelate. It functions in the pathway amino-acid biosynthesis; L-lysine biosynthesis via DAP pathway; DL-2,6-diaminopimelate from LL-2,6-diaminopimelate: step 1/1. Functionally, catalyzes the stereoinversion of LL-2,6-diaminopimelate (L,L-DAP) to meso-diaminopimelate (meso-DAP), a precursor of L-lysine and an essential component of the bacterial peptidoglycan. This Pseudomonas savastanoi pv. phaseolicola (strain 1448A / Race 6) (Pseudomonas syringae pv. phaseolicola (strain 1448A / Race 6)) protein is Diaminopimelate epimerase.